A 366-amino-acid chain; its full sequence is Chorismate synthase (366 aa).

NADP(+) contacts are provided by Arg48 and Arg54. FMN is bound by residues 125 to 127 (RSS), 238 to 239 (NA), Gly278, 293 to 297 (KPTSS), and Arg319.

The protein belongs to the chorismate synthase family. As to quaternary structure, homotetramer. FMNH2 is required as a cofactor.

It carries out the reaction 5-O-(1-carboxyvinyl)-3-phosphoshikimate = chorismate + phosphate. It functions in the pathway metabolic intermediate biosynthesis; chorismate biosynthesis; chorismate from D-erythrose 4-phosphate and phosphoenolpyruvate: step 7/7. Functionally, catalyzes the anti-1,4-elimination of the C-3 phosphate and the C-6 proR hydrogen from 5-enolpyruvylshikimate-3-phosphate (EPSP) to yield chorismate, which is the branch point compound that serves as the starting substrate for the three terminal pathways of aromatic amino acid biosynthesis. This reaction introduces a second double bond into the aromatic ring system. The sequence is that of Chorismate synthase from Pseudoalteromonas atlantica (strain T6c / ATCC BAA-1087).